A 403-amino-acid polypeptide reads, in one-letter code: GPI-N-acetylgalactosamine transferase PGAP4 (403 aa).

Residues 1-22 (MSTSTSPAAMLLRRLRRLSWGS) lie on the Cytoplasmic side of the membrane. Residues 23–43 (TAVQLFILTVVTFGLLAPLAC) traverse the membrane as a helical segment. Topologically, residues 44–259 (HRLLHSYFYL…RLQHYTNPEP (216 aa)) are lumenal. Valine 109 is a UDP-N-acetyl-alpha-D-galactosamine binding site. 2 cysteine pairs are disulfide-bonded: cysteine 132/cysteine 136 and cysteine 144/cysteine 194. Residues 211–213 (EDD) carry the DXD motif motif. A helical transmembrane segment spans residues 260 to 280 (MRILEWVGVGMLLGPLLTWIY). Over 281-287 (MRFASRP) the chain is Cytoplasmic. Residues 288–308 (GFSWPVMLFFSLYSMGLVELV) form a helical membrane-spanning segment. Residues 309–403 (GRHYFLELRR…LRYNFHPSLL (95 aa)) lie on the Lumenal side of the membrane. A disulfide bridge connects residues cysteine 332 and cysteine 333. Residues threonine 334, proline 335, and lysine 362 each contribute to the UDP-N-acetyl-alpha-D-galactosamine site.

Belongs to the PGAP4 family. Post-translationally, glycosylated.

It localises to the golgi apparatus membrane. Functionally, golgi-resident glycosylphosphatidylinositol (GPI)-N-acetylgalactosamine transferase that catalyzes the N-acetyl-beta-D-galactosamine transfer from an UDP-N-acetyl-alpha-D-galactosamine to the 4-OH-position of first mannose of the glycosylphosphatidylinositol (GPI) of a GPI-anchored protein (GPI-AP). This modification occurs after the fatty acid remodeling step of the GPI-anchor maturation. The sequence is that of GPI-N-acetylgalactosamine transferase PGAP4 from Pongo abelii (Sumatran orangutan).